Here is a 167-residue protein sequence, read N- to C-terminus: Xanthine-guanine phosphoribosyltransferase (167 aa).

Residues 47-48, Q79, and 102-110 contribute to the 5-phospho-alpha-D-ribose 1-diphosphate site; these read RG and DDLVDSGKT. Q79 lines the GMP pocket. D103 is a binding site for Mg(2+). Positions 106 and 149 each coordinate guanine. Positions 106 and 149 each coordinate xanthine. GMP-binding positions include 106–110 and 148–149; these read DSGKT and WI.

It belongs to the purine/pyrimidine phosphoribosyltransferase family. XGPT subfamily. In terms of assembly, homotetramer. Requires Mg(2+) as cofactor.

It localises to the cell inner membrane. The catalysed reaction is GMP + diphosphate = guanine + 5-phospho-alpha-D-ribose 1-diphosphate. The enzyme catalyses XMP + diphosphate = xanthine + 5-phospho-alpha-D-ribose 1-diphosphate. It carries out the reaction IMP + diphosphate = hypoxanthine + 5-phospho-alpha-D-ribose 1-diphosphate. It participates in purine metabolism; GMP biosynthesis via salvage pathway; GMP from guanine: step 1/1. The protein operates within purine metabolism; XMP biosynthesis via salvage pathway; XMP from xanthine: step 1/1. Purine salvage pathway enzyme that catalyzes the transfer of the ribosyl-5-phosphate group from 5-phospho-alpha-D-ribose 1-diphosphate (PRPP) to the N9 position of the 6-oxopurines guanine and xanthine to form the corresponding ribonucleotides GMP (guanosine 5'-monophosphate) and XMP (xanthosine 5'-monophosphate), with the release of PPi. To a lesser extent, also acts on hypoxanthine. This is Xanthine-guanine phosphoribosyltransferase from Cereibacter sphaeroides (strain ATCC 17029 / ATH 2.4.9) (Rhodobacter sphaeroides).